The sequence spans 272 residues: HMP-PP phosphatase (272 aa).

The active-site Nucleophile is the aspartate 8. Residues aspartate 8, aspartate 10, and aspartate 212 each coordinate Mg(2+).

This sequence belongs to the HAD-like hydrolase superfamily. Cof family. Mg(2+) serves as cofactor.

The enzyme catalyses 4-amino-2-methyl-5-(diphosphooxymethyl)pyrimidine + H2O = 4-amino-2-methyl-5-(phosphooxymethyl)pyrimidine + phosphate + H(+). Functionally, catalyzes the hydrolysis of 4-amino-2-methyl-5-hydroxymethylpyrimidine pyrophosphate (HMP-PP) to 4-amino-2-methyl-5-hydroxymethylpyrimidine phosphate (HMP-P). The protein is HMP-PP phosphatase of Salmonella arizonae (strain ATCC BAA-731 / CDC346-86 / RSK2980).